Here is a 202-residue protein sequence, read N- to C-terminus: Small ribosomal subunit protein uS4c (202 aa).

A compositionally biased stretch (basic residues) spans 1 to 13 (MSRYRGPRMKMIR). Positions 1 to 41 (MSRYRGPRMKMIRRPGTLPGLTSKTPGTKVGSSDRSTSSKK) are disordered. Positions 29 to 41 (KVGSSDRSTSSKK) are enriched in low complexity. The region spanning 90–153 (MRLDNTIFRL…KCRLVDRRDM (64 aa)) is the S4 RNA-binding domain.

It belongs to the universal ribosomal protein uS4 family. Part of the 30S ribosomal subunit. Contacts protein S5. The interaction surface between S4 and S5 is involved in control of translational fidelity.

The protein localises to the plastid. One of the primary rRNA binding proteins, it binds directly to 16S rRNA where it nucleates assembly of the body of the 30S subunit. Its function is as follows. With S5 and S12 plays an important role in translational accuracy. The chain is Small ribosomal subunit protein uS4c (rps4) from Aneura mirabilis (Parasitic liverwort).